Here is a 118-residue protein sequence, read N- to C-terminus: UPF0148 protein LS215_1455 (118 aa).

This sequence belongs to the UPF0148 family.

The sequence is that of UPF0148 protein LS215_1455 from Saccharolobus islandicus (strain L.S.2.15 / Lassen #1) (Sulfolobus islandicus).